Consider the following 227-residue polypeptide: ATP phosphoribosyltransferase (227 aa).

The protein belongs to the ATP phosphoribosyltransferase family. Short subfamily. In terms of assembly, heteromultimer composed of HisG and HisZ subunits.

Its subcellular location is the cytoplasm. It catalyses the reaction 1-(5-phospho-beta-D-ribosyl)-ATP + diphosphate = 5-phospho-alpha-D-ribose 1-diphosphate + ATP. It functions in the pathway amino-acid biosynthesis; L-histidine biosynthesis; L-histidine from 5-phospho-alpha-D-ribose 1-diphosphate: step 1/9. In terms of biological role, catalyzes the condensation of ATP and 5-phosphoribose 1-diphosphate to form N'-(5'-phosphoribosyl)-ATP (PR-ATP). Has a crucial role in the pathway because the rate of histidine biosynthesis seems to be controlled primarily by regulation of HisG enzymatic activity. The polypeptide is ATP phosphoribosyltransferase (Bordetella avium (strain 197N)).